A 180-amino-acid chain; its full sequence is Inner membrane-spanning protein YciB (180 aa).

5 helical membrane-spanning segments follow: residues 10–30 (IIAFFVFYKLADIYVATGVLM), 47–67 (ITTRHWVILAVVMLFGAVTLL), 74–94 (IKMKVSVVYVAIALMLLGGLI), 121–141 (YAWIIFCLALAAVNLYIAEFW), and 151–171 (VFGILGISLVFTIGTGFYMYH).

The protein belongs to the YciB family.

The protein resides in the cell inner membrane. Plays a role in cell envelope biogenesis, maintenance of cell envelope integrity and membrane homeostasis. The sequence is that of Inner membrane-spanning protein YciB from Idiomarina loihiensis (strain ATCC BAA-735 / DSM 15497 / L2-TR).